Consider the following 245-residue polypeptide: 1-(5-phosphoribosyl)-5-[(5-phosphoribosylamino)methylideneamino] imidazole-4-carboxamide isomerase (245 aa).

The active-site Proton acceptor is Asp-8. Asp-131 acts as the Proton donor in catalysis.

Belongs to the HisA/HisF family.

It localises to the cytoplasm. The enzyme catalyses 1-(5-phospho-beta-D-ribosyl)-5-[(5-phospho-beta-D-ribosylamino)methylideneamino]imidazole-4-carboxamide = 5-[(5-phospho-1-deoxy-D-ribulos-1-ylimino)methylamino]-1-(5-phospho-beta-D-ribosyl)imidazole-4-carboxamide. Its pathway is amino-acid biosynthesis; L-histidine biosynthesis; L-histidine from 5-phospho-alpha-D-ribose 1-diphosphate: step 4/9. This chain is 1-(5-phosphoribosyl)-5-[(5-phosphoribosylamino)methylideneamino] imidazole-4-carboxamide isomerase, found in Neisseria meningitidis serogroup C (strain 053442).